The sequence spans 159 residues: Small ribosomal subunit protein bS16 (159 aa).

Residues 102–119 (GIPEAAEEAPATESVAEA) are compositionally biased toward low complexity. A disordered region spans residues 102–159 (GIPEAAEEAPATESVAEAEVADVPESELSEAATETAAAELSPPEAEVEKPQVEEAVEA). Residues 120–129 (EVADVPESEL) are compositionally biased toward acidic residues. The span at 130–145 (SEAATETAAAELSPPE) shows a compositional bias: low complexity.

Belongs to the bacterial ribosomal protein bS16 family.

This is Small ribosomal subunit protein bS16 from Synechococcus sp. (strain JA-2-3B'a(2-13)) (Cyanobacteria bacterium Yellowstone B-Prime).